The chain runs to 994 residues: Glycine dehydrogenase (decarboxylating) (994 aa).

The segment at 1 to 20 is disordered; sequence MTDHAENRCGLEGPRPFSSR. Lysine 716 is modified (N6-(pyridoxal phosphate)lysine).

The protein belongs to the GcvP family. The glycine cleavage system is composed of four proteins: P, T, L and H. It depends on pyridoxal 5'-phosphate as a cofactor.

The catalysed reaction is N(6)-[(R)-lipoyl]-L-lysyl-[glycine-cleavage complex H protein] + glycine + H(+) = N(6)-[(R)-S(8)-aminomethyldihydrolipoyl]-L-lysyl-[glycine-cleavage complex H protein] + CO2. Functionally, the glycine cleavage system catalyzes the degradation of glycine. The P protein binds the alpha-amino group of glycine through its pyridoxal phosphate cofactor; CO(2) is released and the remaining methylamine moiety is then transferred to the lipoamide cofactor of the H protein. This is Glycine dehydrogenase (decarboxylating) from Cutibacterium acnes (strain DSM 16379 / KPA171202) (Propionibacterium acnes).